Reading from the N-terminus, the 30-residue chain is Cytochrome c oxidase subunit 5C (30 aa).

Residues 15–30 form a helical membrane-spanning segment; the sequence is VVKELVIXXXLGLXAG.

This sequence belongs to the cytochrome c oxidase subunit 5C family.

It localises to the mitochondrion inner membrane. Its function is as follows. This protein is one of the nuclear-coded polypeptide chains of cytochrome c oxidase, the terminal oxidase in mitochondrial electron transport. The protein is Cytochrome c oxidase subunit 5C (COX5C) of Solanum tuberosum (Potato).